The sequence spans 398 residues: S-adenosylmethionine synthase (398 aa).

His16 provides a ligand contact to ATP. Asp18 contacts Mg(2+). Glu51 contacts K(+). The L-methionine site is built by Glu64 and Gln108. Residues 108 to 118 (QSADIAQGVDA) form a flexible loop region. Residues 176–178 (DSK), 242–243 (KF), Asp251, 257–258 (RK), Ala274, and Lys278 contribute to the ATP site. Asp251 is an L-methionine binding site. An L-methionine-binding site is contributed by Lys282.

It belongs to the AdoMet synthase family. In terms of assembly, homotetramer; dimer of dimers. Mg(2+) is required as a cofactor. It depends on K(+) as a cofactor.

It localises to the cytoplasm. The enzyme catalyses L-methionine + ATP + H2O = S-adenosyl-L-methionine + phosphate + diphosphate. Its pathway is amino-acid biosynthesis; S-adenosyl-L-methionine biosynthesis; S-adenosyl-L-methionine from L-methionine: step 1/1. Catalyzes the formation of S-adenosylmethionine (AdoMet) from methionine and ATP. The overall synthetic reaction is composed of two sequential steps, AdoMet formation and the subsequent tripolyphosphate hydrolysis which occurs prior to release of AdoMet from the enzyme. The chain is S-adenosylmethionine synthase from Rhodopseudomonas palustris (strain HaA2).